The chain runs to 226 residues: ATP synthase F(0) complex subunit a (226 aa).

Transmembrane regions (helical) follow at residues 6-26 (FASFITPTMMGFPIVVAIIMF), 68-88 (WTLMIVSLIMFIGSTNLLGLL), 97-117 (QLSMNLSMAIPLWAGAVITGF), 138-158 (IPMLIIIETISLFIQPMALAV), 164-184 (ITAGHLLMHLIGGATLVLMNI), and 189-209 (ATITFIILLLLTILEFAVALI).

The protein belongs to the ATPase A chain family. In terms of assembly, component of the ATP synthase complex composed at least of ATP5F1A/subunit alpha, ATP5F1B/subunit beta, ATP5MC1/subunit c (homooctomer), MT-ATP6/subunit a, MT-ATP8/subunit 8, ATP5ME/subunit e, ATP5MF/subunit f, ATP5MG/subunit g, ATP5MK/subunit k, ATP5MJ/subunit j, ATP5F1C/subunit gamma, ATP5F1D/subunit delta, ATP5F1E/subunit epsilon, ATP5PF/subunit F6, ATP5PB/subunit b, ATP5PD/subunit d, ATP5PO/subunit OSCP. ATP synthase complex consists of a soluble F(1) head domain (subunits alpha(3) and beta(3)) - the catalytic core - and a membrane F(0) domain - the membrane proton channel (subunits c, a, 8, e, f, g, k and j). These two domains are linked by a central stalk (subunits gamma, delta, and epsilon) rotating inside the F1 region and a stationary peripheral stalk (subunits F6, b, d, and OSCP). Interacts with DNAJC30; interaction is direct.

It is found in the mitochondrion inner membrane. It carries out the reaction H(+)(in) = H(+)(out). Subunit a, of the mitochondrial membrane ATP synthase complex (F(1)F(0) ATP synthase or Complex V) that produces ATP from ADP in the presence of a proton gradient across the membrane which is generated by electron transport complexes of the respiratory chain. ATP synthase complex consist of a soluble F(1) head domain - the catalytic core - and a membrane F(1) domain - the membrane proton channel. These two domains are linked by a central stalk rotating inside the F(1) region and a stationary peripheral stalk. During catalysis, ATP synthesis in the catalytic domain of F(1) is coupled via a rotary mechanism of the central stalk subunits to proton translocation. With the subunit c (ATP5MC1), forms the proton-conducting channel in the F(0) domain, that contains two crucial half-channels (inlet and outlet) that facilitate proton movement from the mitochondrial intermembrane space (IMS) into the matrix. Protons are taken up via the inlet half-channel and released through the outlet half-channel, following a Grotthuss mechanism. This chain is ATP synthase F(0) complex subunit a, found in Mus musculus (Mouse).